Consider the following 135-residue polypeptide: Hemoglobin subunit beta-2 (135 aa).

Residues 2–135 (HWTAEEKALV…VVDALSKGYH (134 aa)) form the Globin domain. Heme b-binding residues include His-57 and His-81.

It belongs to the globin family. As to quaternary structure, hb 2 is a heterotetramer of two alpha and two beta-2 chains. Red blood cells (at protein level).

Involved in oxygen transport from gills to the various peripheral tissues. The sequence is that of Hemoglobin subunit beta-2 from Somniosus microcephalus (Greenland sleeper shark).